Here is a 229-residue protein sequence, read N- to C-terminus: Peroxiredoxin-like 2A (229 aa).

Residues 14–112 (MWSIGAGALG…DQLGVPLYAV (99 aa)) form a thioredoxin fold region. Active-site redox-active residues include C85 and C88.

The protein belongs to the peroxiredoxin-like PRXL2 family. PRXL2A subfamily. In terms of tissue distribution, expressed in CSF1 and TNFSF11-stimulated CD14(+) peripheral blood mononuclear cells (PBMCs).

It localises to the cytoplasm. The protein resides in the secreted. Involved in redox regulation of the cell. Acts as an antioxidant. Inhibits TNFSF11-induced NFKB1 and JUN activation and osteoclast differentiation. May affect bone resorption and help to maintain bone mass. Acts as a negative regulator of macrophage-mediated inflammation by inhibiting macrophage production of inflammatory cytokines, probably through suppression of the MAPK signaling pathway. This is Peroxiredoxin-like 2A from Homo sapiens (Human).